The chain runs to 104 residues: Nucleoid-associated protein Moth_0028 (104 aa).

The protein belongs to the YbaB/EbfC family. In terms of assembly, homodimer.

The protein resides in the cytoplasm. It is found in the nucleoid. Its function is as follows. Binds to DNA and alters its conformation. May be involved in regulation of gene expression, nucleoid organization and DNA protection. This is Nucleoid-associated protein Moth_0028 from Moorella thermoacetica (strain ATCC 39073 / JCM 9320).